The primary structure comprises 1416 residues: DNA-directed RNA polymerase subunit beta' (1416 aa).

Positions 68, 70, 83, and 86 each coordinate Zn(2+). Mg(2+) is bound by residues aspartate 458, aspartate 460, and aspartate 462. Residues cysteine 811, cysteine 884, cysteine 891, and cysteine 894 each contribute to the Zn(2+) site.

The protein belongs to the RNA polymerase beta' chain family. The RNAP catalytic core consists of 2 alpha, 1 beta, 1 beta' and 1 omega subunit. When a sigma factor is associated with the core the holoenzyme is formed, which can initiate transcription. Mg(2+) serves as cofactor. It depends on Zn(2+) as a cofactor.

It carries out the reaction RNA(n) + a ribonucleoside 5'-triphosphate = RNA(n+1) + diphosphate. DNA-dependent RNA polymerase catalyzes the transcription of DNA into RNA using the four ribonucleoside triphosphates as substrates. The sequence is that of DNA-directed RNA polymerase subunit beta' from Francisella philomiragia subsp. philomiragia (strain ATCC 25017 / CCUG 19701 / FSC 153 / O#319-036).